Consider the following 645-residue polypeptide: DNA mismatch repair protein MutL (645 aa).

Disordered regions lie at residues arginine 353–glutamine 381 and glutamine 395–glycine 420.

This sequence belongs to the DNA mismatch repair MutL/HexB family.

In terms of biological role, this protein is involved in the repair of mismatches in DNA. It is required for dam-dependent methyl-directed DNA mismatch repair. May act as a 'molecular matchmaker', a protein that promotes the formation of a stable complex between two or more DNA-binding proteins in an ATP-dependent manner without itself being part of a final effector complex. This chain is DNA mismatch repair protein MutL, found in Pseudomonas syringae pv. tomato (strain ATCC BAA-871 / DC3000).